The sequence spans 487 residues: MVNTQNQISQTSDLDYIVNQPYKYGFTTSVESEQFPRGISREVVKLISKKKNEPEYLLNFRLKAYEKWTKMKNPKWAHLKHPNIDFNSIIYYAVPKLKKELNSLDEVDPEILDTFNKLGISLNEQKRLSNVAVDAVFDSVSIATTFKKELAEAGVIFCSISEAIRNYPDLIQKYLGTVVPSGDNYFAALNSAVFSDGSFCYIPPDTVCPLELSTYFRINNEESGQFERTLIVADRGSKVSYLEGCTAPQYDTNQLHAAIVELIALDDAEIKYSTVQNWYAGNKDGKGGIYNFVTKRGLCSGKNSKISWTQVETGSAITWKYPGCILAGDNSQGEFYSVALTNNYQEADTGTKMIHIGNNTKSKIISKGISAGKSKNSYRGLVKIGPQSFNSRNYSQCDSLLIGQSSQANTFPYIQVQNPTAKVEHEASTSKISEDQIFYFLQRGINLEESVSLMISGFCKDVFNELPMEFAVEADRLLSLKLEGTVG.

This sequence belongs to the iron-sulfur cluster assembly SufBD family.

The protein resides in the plastid. The protein localises to the chloroplast. This is Iron-sulfur cluster assembly SufBD family protein ycf24 (ycf24) from Porphyra purpurea (Red seaweed).